A 1132-amino-acid polypeptide reads, in one-letter code: Mediator of RNA polymerase II transcription subunit 5 (1132 aa).

Residues 998–1023 (KGDVDIKGEDLHEKNDSAEVRQETQP) are compositionally biased toward basic and acidic residues. The disordered stretch occupies residues 998 to 1070 (KGDVDIKGED…RTNNVPMIKA (73 aa)). Acidic residues predominate over residues 1047 to 1057 (YEEEEENEDND).

The protein belongs to the Mediator complex subunit 5 family. Component of the Mediator complex, which is composed of at least 21 subunits that form three structurally distinct submodules. The Mediator head module contains MED6, MED8, MED11, SRB4/MED17, SRB5/MED18, ROX3/MED19, SRB2/MED20 and SRB6/MED22, the middle module contains MED1, MED4, NUT1/MED5, MED7, CSE2/MED9, NUT2/MED10, SRB7/MED21 and SOH1/MED31, and the tail module contains MED2, PGD1/MED3, RGR1/MED14, GAL11/MED15 and SIN4/MED16. The head and the middle modules interact directly with RNA polymerase II, whereas the elongated tail module interacts with gene-specific regulatory proteins.

It is found in the nucleus. Its function is as follows. Component of the Mediator complex, a coactivator involved in the regulated transcription of nearly all RNA polymerase II-dependent genes. Mediator functions as a bridge to convey information from gene-specific regulatory proteins to the basal RNA polymerase II transcription machinery. The Mediator complex, having a compact conformation in its free form, is recruited to promoters by direct interactions with regulatory proteins and serves for the assembly of a functional preinitiation complex with RNA polymerase II and the general transcription factors. The Mediator complex unfolds to an extended conformation and partially surrounds RNA polymerase II, specifically interacting with the unphosphorylated form of the C-terminal domain (CTD) of RNA polymerase II. The Mediator complex dissociates from the RNA polymerase II holoenzyme and stays at the promoter when transcriptional elongation begins. This is Mediator of RNA polymerase II transcription subunit 5 (NUT1) from Saccharomyces cerevisiae (strain ATCC 204508 / S288c) (Baker's yeast).